A 467-amino-acid polypeptide reads, in one-letter code: Glutamine synthetase (467 aa).

The GS beta-grasp domain occupies 14–98; that stretch reads EEVEYVDIRF…VHCNVVEPDT (85 aa). The region spanning 106–467 is the GS catalytic domain; that stretch reads PRGAAVKAEA…PVEYQMYYSC (362 aa). Glu131 and Glu133 together coordinate Mg(2+). Position 209 (Asp209) interacts with ATP. Glu214 and Glu221 together coordinate Mg(2+). L-glutamate contacts are provided by residues 265–266 and Gly266; that span reads NG. Residue His270 coordinates Mg(2+). ATP contacts are provided by residues 272–274 and Ser274; that span reads NMS. L-glutamate-binding residues include Arg320, Glu326, and Arg338. ATP-binding residues include Arg338 and Arg343. Glu356 lines the Mg(2+) pocket. Position 358 (Arg358) interacts with L-glutamate. Tyr396 bears the O-AMP-tyrosine mark.

This sequence belongs to the glutamine synthetase family. Oligomer of 12 subunits arranged in the form of two hexameric ring. It depends on Mg(2+) as a cofactor.

It localises to the cytoplasm. The enzyme catalyses L-glutamate + NH4(+) + ATP = L-glutamine + ADP + phosphate + H(+). Its activity is regulated as follows. The activity of this enzyme could be controlled by adenylation under conditions of abundant glutamine. Functionally, catalyzes the ATP-dependent biosynthesis of glutamine from glutamate and ammonia. The chain is Glutamine synthetase from Cereibacter sphaeroides (Rhodobacter sphaeroides).